A 73-amino-acid chain; its full sequence is Antimicrobial peptide TsAP-2 (73 aa).

A signal peptide spans Met1 to Ala22. A Lysine amide modification is found at Lys39. Residues Glu45–Tyr73 constitute a propeptide that is removed on maturation.

It belongs to the non-disulfide-bridged peptide (NDBP) superfamily. Short antimicrobial peptide (group 4) family. As to expression, expressed by the venom gland.

The protein resides in the secreted. Functionally, antimicrobial peptide. Has a high antibacterial activity against the Gram-positive bacterium S.aureus (MIC=5-17.30 uM), the methicillin-resistant S.aureus (MRSA) (MIC=17.30 uM), and E.faecalis (MIC=69.23 uM). Has antifungal activity against Candida spp. and one Cryptococcus neoformans strains with MICs values ranging from 6.25 to 100 uM. Also shows an inhibitory activity on C.albicans biofilms at high concentrations. Has a moderate hemolytic potency (18% at 20 uM). Also inhibits the growth of the five human cancer cell lines tested (the squamous carcinoma cell line H157 (IC(50)=4.1 uM), the lung adenocarcinoma cell line H838 (11.0 uM), the breast carcinoma cell line MCF-7 (6.4 uM), the androgen-independent prostate adenocarcinoma cell line PC3 (13.3 uM) and the glioblastoma cell line U251-MG (15.4 uM)). In the model of polymicrobial sepsis, it exhibits an antibiotic effect, reducing the levels of microorganisms in the infectious focus and the inflammatory responses in the lung and cecum of septic animals. This Tityus serrulatus (Brazilian scorpion) protein is Antimicrobial peptide TsAP-2.